Reading from the N-terminus, the 225-residue chain is Holliday junction branch migration complex subunit RuvA (225 aa).

Residues 1 to 71 (MISWINGDLV…EDSDLLFGFT (71 aa)) are domain I. The segment at 72–150 (SNEQKNFFIE…SEILSEEEKS (79 aa)) is domain II. The tract at residues 151-161 (KGELEIKDPEI) is flexible linker. The tract at residues 161–225 (INKMIEDLQL…LDEDSSNIAR (65 aa)) is domain III.

The protein belongs to the RuvA family. As to quaternary structure, homotetramer. Forms an RuvA(8)-RuvB(12)-Holliday junction (HJ) complex. HJ DNA is sandwiched between 2 RuvA tetramers; dsDNA enters through RuvA and exits via RuvB. An RuvB hexamer assembles on each DNA strand where it exits the tetramer. Each RuvB hexamer is contacted by two RuvA subunits (via domain III) on 2 adjacent RuvB subunits; this complex drives branch migration. In the full resolvosome a probable DNA-RuvA(4)-RuvB(12)-RuvC(2) complex forms which resolves the HJ.

It localises to the cytoplasm. Its function is as follows. The RuvA-RuvB-RuvC complex processes Holliday junction (HJ) DNA during genetic recombination and DNA repair, while the RuvA-RuvB complex plays an important role in the rescue of blocked DNA replication forks via replication fork reversal (RFR). RuvA specifically binds to HJ cruciform DNA, conferring on it an open structure. The RuvB hexamer acts as an ATP-dependent pump, pulling dsDNA into and through the RuvAB complex. HJ branch migration allows RuvC to scan DNA until it finds its consensus sequence, where it cleaves and resolves the cruciform DNA. The protein is Holliday junction branch migration complex subunit RuvA of Prochlorococcus marinus (strain MIT 9301).